Consider the following 141-residue polypeptide: Large ribosomal subunit protein uL11 (141 aa).

This sequence belongs to the universal ribosomal protein uL11 family. In terms of assembly, part of the ribosomal stalk of the 50S ribosomal subunit. Interacts with L10 and the large rRNA to form the base of the stalk. L10 forms an elongated spine to which 2 L12 dimers bind in a sequential fashion forming a pentameric L10(L12)2(L12)2 complex. In stalled/isolated 50S subunits interacts with RqcH. One or more lysine residues are methylated.

In terms of biological role, forms part of the ribosomal stalk which helps the ribosome interact with GTP-bound translation factors. Required to recruit RqcH, which is part of the ribosome quality control system (RQC), to stalled 50S ribosomal subunits. The polypeptide is Large ribosomal subunit protein uL11 (Bacillus subtilis (strain 168)).